The chain runs to 780 residues: Tyrosine-protein phosphatase non-receptor type 12 (780 aa).

At methionine 1 the chain carries N-acetylmethionine. Position 19 is a phosphoserine (serine 19). Residues 28-293 (FARDFMRLRR…ELVHRAIAQL (266 aa)) form the Tyrosine-protein phosphatase domain. Substrate-binding positions include arginine 36, 63–67 (RYKDI), aspartate 199, 231–237 (CSAGCGR), and glutamine 278. The active-site Phosphocysteine intermediate is cysteine 231. A phosphoserine mark is found at serine 332, serine 435, serine 449, and serine 468. Residues 345-438 (VEGDAKEEIL…KLERNLSFEI (94 aa)) are interaction with TGFB1I1. Residues 502–519 (QSNKVSVTPPEESQNSDT) are compositionally biased toward polar residues. 3 disordered regions span residues 502-639 (QSNK…STES), 657-725 (GTTH…EKCD), and 744-780 (SDKR…SEWT). 2 positions are modified to phosphothreonine: threonine 509 and threonine 519. A compositionally biased stretch (basic and acidic residues) spans 521–533 (PRPDRLPLDEKGH). Composition is skewed to polar residues over residues 552-577 (EGNS…TQVE) and 587-601 (TSPL…TNPL). Serine 567 is modified (phosphoserine). Threonine 569 carries the post-translational modification Phosphothreonine. A phosphoserine mark is found at serine 571 and serine 596. Threonine 598 bears the Phosphothreonine mark. The segment covering 602-613 (HSDDSDSDERNS) has biased composition (basic and acidic residues). Phosphoserine is present on residues serine 603, serine 606, serine 608, and serine 613. Residues 622–639 (TNISTASATVSAATSTES) show a composition bias toward low complexity. Serine 673 and serine 689 each carry phosphoserine. Positions 690–703 (EHNTPVRSEWSELQ) are enriched in polar residues. Threonine 693 carries the phosphothreonine modification. Basic and acidic residues-rich tracts occupy residues 704 to 725 (SQER…EKCD) and 771 to 780 (GPRDPPSEWT).

It belongs to the protein-tyrosine phosphatase family. Non-receptor class 4 subfamily. In terms of assembly, interacts with TGFB1I1. Interacts with PSTPIP1. Interacts with PTK2B/PYK2. Interacts with LPXN. Interacts with SORBS2; this interaction greatly enhances WASF1 dephosphorylation and might mediate partial translocation to focal adhesion sites. In terms of processing, phosphorylated by STK24/MST3 and this results in inhibition of its activity.

It is found in the cytoplasm. The protein resides in the cell junction. The protein localises to the focal adhesion. It localises to the cell projection. Its subcellular location is the podosome. The catalysed reaction is O-phospho-L-tyrosyl-[protein] + H2O = L-tyrosyl-[protein] + phosphate. In terms of biological role, dephosphorylates a range of proteins, and thereby regulates cellular signaling cascades. Dephosphorylates cellular tyrosine kinases, such as ERBB2 and PTK2B/PYK2, and thereby regulates signaling via ERBB2 and PTK2B/PYK2. Selectively dephosphorylates ERBB2 phosphorylated at 'Tyr-1112', 'Tyr-1196', and/or 'Tyr-1248'. This Homo sapiens (Human) protein is Tyrosine-protein phosphatase non-receptor type 12 (PTPN12).